Here is a 39-residue protein sequence, read N- to C-terminus: Metallocarboxypeptidase inhibitor (39 aa).

At Q1 the chain carries Pyrrolidone carboxylic acid. 3 cysteine pairs are disulfide-bonded: C8-C24, C12-C27, and C18-C34.

As to expression, highly concentrated in tubers. Closely related but distinct forms of MCPI are present in leaves, stems and buds.

May play a defensive role against insect attacks. Inhibits A.aegypti carboxypeptidase CPB1. This is Metallocarboxypeptidase inhibitor from Solanum tuberosum (Potato).